Consider the following 418-residue polypeptide: Gamma-glutamyl phosphate reductase (418 aa).

The protein belongs to the gamma-glutamyl phosphate reductase family.

The protein resides in the cytoplasm. The catalysed reaction is L-glutamate 5-semialdehyde + phosphate + NADP(+) = L-glutamyl 5-phosphate + NADPH + H(+). It participates in amino-acid biosynthesis; L-proline biosynthesis; L-glutamate 5-semialdehyde from L-glutamate: step 2/2. Its function is as follows. Catalyzes the NADPH-dependent reduction of L-glutamate 5-phosphate into L-glutamate 5-semialdehyde and phosphate. The product spontaneously undergoes cyclization to form 1-pyrroline-5-carboxylate. The sequence is that of Gamma-glutamyl phosphate reductase from Syntrophotalea carbinolica (strain DSM 2380 / NBRC 103641 / GraBd1) (Pelobacter carbinolicus).